The chain runs to 267 residues: 4-hydroxy-tetrahydrodipicolinate reductase (267 aa).

Residues 8–13 and E34 contribute to the NAD(+) site; that span reads GAAGRM. R35 lines the NADP(+) pocket. Residues 98 to 100 and 122 to 125 contribute to the NAD(+) site; these read GST and APNM. H155 functions as the Proton donor/acceptor in the catalytic mechanism. H156 contributes to the (S)-2,3,4,5-tetrahydrodipicolinate binding site. Catalysis depends on K159, which acts as the Proton donor. 165–166 is a binding site for (S)-2,3,4,5-tetrahydrodipicolinate; the sequence is GT.

Belongs to the DapB family.

The protein resides in the cytoplasm. It carries out the reaction (S)-2,3,4,5-tetrahydrodipicolinate + NAD(+) + H2O = (2S,4S)-4-hydroxy-2,3,4,5-tetrahydrodipicolinate + NADH + H(+). The enzyme catalyses (S)-2,3,4,5-tetrahydrodipicolinate + NADP(+) + H2O = (2S,4S)-4-hydroxy-2,3,4,5-tetrahydrodipicolinate + NADPH + H(+). Its pathway is amino-acid biosynthesis; L-lysine biosynthesis via DAP pathway; (S)-tetrahydrodipicolinate from L-aspartate: step 4/4. Catalyzes the conversion of 4-hydroxy-tetrahydrodipicolinate (HTPA) to tetrahydrodipicolinate. This is 4-hydroxy-tetrahydrodipicolinate reductase from Geotalea daltonii (strain DSM 22248 / JCM 15807 / FRC-32) (Geobacter daltonii).